A 492-amino-acid polypeptide reads, in one-letter code: MDPFPLVAAALFIAATWFITFKRRRNLPPGPFPYPIVGNMLQLGSQPHETFAKLSKKYGPLMSIHLGSLYTVIISSPEMAKEIMHKYGQVFSGRTIAQAVHACDHDKISMGFLPVGAEWRDMRKICKEQMFSHQSMEDSQNLRKQKLQQLLEYAQKCSEEGRGIDIREAAFITTLNLMSATLFSMQATEFDSKVTMEFKEIIEGVASIVGVPNFADYFPILRPFDPQGVKRRADVYFGRLLGLIEGYLNERIEFRKANPNAPKKDDFLETLVDALDAKDYKLKTEHLTHLMLDLFVGGSETSTTEIEWIMWELLASPEKMAKVKAELKSVMGGEKVVDESMMPRLPYLQAVVKESMRLHPPGPLLLPRKAESDQVVNGYLIPKGAQVLINAWAMGRDPSLWKNPDSFEPERFLDQKIDFKGTDYELIPFGSGRRVCPGMPLANRILHTVTATLVHNFDWKLERPEASDAHKGVLFGFAVRRAVPLKIVPIKA.

The chain crosses the membrane as a helical span at residues 1–21 (MDPFPLVAAALFIAATWFITF). Residue C436 coordinates heme.

This sequence belongs to the cytochrome P450 family. The cofactor is heme. As to expression, expressed in leaf glandular trichomes.

The protein resides in the membrane. The catalysed reaction is abieta-8,11,13-triene + reduced [NADPH--hemoprotein reductase] + O2 = ferruginol + oxidized [NADPH--hemoprotein reductase] + H2O + H(+). The enzyme catalyses ferruginol + reduced [NADPH--hemoprotein reductase] + O2 = 11-hydroxyferruginol + oxidized [NADPH--hemoprotein reductase] + H2O + H(+). It catalyses the reaction miltiradiene + 2 reduced [NADPH--hemoprotein reductase] + 2 O2 = 11-oxomiltiradiene + 2 oxidized [NADPH--hemoprotein reductase] + 3 H2O + 2 H(+). The protein operates within secondary metabolite biosynthesis; terpenoid biosynthesis. Functionally, monooxygenase involved in the biosynthesis of labdane-related diterpenes natural products. Catalyzes the oxidation of abietatriene to produce ferruginol. Catalyzes the oxidation of ferruginol at C-12 to produce 11-hydroxyferruginol. Ferruginol and 11-hydroxyferruginol are intermediates in the biosynthesis of carnosate, a potent antioxidant. May also convert miltiradiene into 11-oxomiltiradiene. This is Ferruginol synthase from Salvia fruticosa (Greek sage).